The chain runs to 422 residues: MAADKPHMNLAVIGHIDHGKSTFVGRLMYDAGAVPAHIIEKYKEEAKQKGKESFAFAWVMDSLKEERERGITIDIAHKRFDTDKFYFTVVDCPGHRDFVKNMITGASQADAAVLVVAAPDGVMAQTKEHIFLSRTLGINQLIVAINKMDAVDYSEARYKEVVEQVSGILKMIGFKPSEIPFIPTSAFHGDNIMKLSDKTPWYKGPAIMEALNSLKEPEKPSTLPLRIPVEDAYTISGIGTVPVGRVETGVMKKGDKVVFMPGGAGGEVKSIEMHHEEIPQATPGDNIGWNVRGIGKNDVRRGDVCGHADNPPKVADEFVGQIVVLQHPSAITAGYTPVFHAHTSQIACQLIALNKKLDPKTGQVKEENPTFLKAGDAAIVTIKPTKPMVIEPVKEIPQLGRFAIRDMGMTIAAGMCMSVKQK.

Positions 5 to 221 (KPHMNLAVIG…NSLKEPEKPS (217 aa)) constitute a tr-type G domain. The G1 stretch occupies residues 14 to 21 (GHIDHGKS). 14-21 (GHIDHGKS) serves as a coordination point for GTP. S21 provides a ligand contact to Mg(2+). Residues 70-74 (GITID) form a G2 region. A G3 region spans residues 91–94 (DCPG). GTP contacts are provided by residues 91–95 (DCPGH) and 146–149 (NKMD). Positions 146–149 (NKMD) are G4. Positions 185-187 (SAF) are G5.

It belongs to the TRAFAC class translation factor GTPase superfamily. Classic translation factor GTPase family. EF-Tu/EF-1A subfamily.

Its subcellular location is the cytoplasm. The enzyme catalyses GTP + H2O = GDP + phosphate + H(+). In terms of biological role, GTP hydrolase that promotes the GTP-dependent binding of aminoacyl-tRNA to the A-site of ribosomes during protein biosynthesis. This Methanosarcina mazei (strain ATCC BAA-159 / DSM 3647 / Goe1 / Go1 / JCM 11833 / OCM 88) (Methanosarcina frisia) protein is Elongation factor 1-alpha.